The following is a 342-amino-acid chain: Paired box protein Pax-9 (342 aa).

The segment at residues 4 to 130 (AFGEVNQLGG…SSISRILRNK (127 aa)) is a DNA-binding region (paired). A PAI subdomain region spans residues 7-63 (EVNQLGGVFVNGRPLPNAIRLRIVELAQLGIRPCDISRQLRVSHGCVSKILARYNET). Residues 82–130 (TVVKHIRTYKQRDPGIFAWEIRDRLLADGVCDKYNVPSVSSISRILRNK) are RED subdomain. The interaction with KDM5B stretch occupies residues 168–189 (AAAAKVPTPPGVPAIPGSVALP).

Interacts with KDM5B. In the embryo, expressed in pharyngeal pouches and derivatives, developing vertebral column, tail, head and limbs.

It is found in the nucleus. Functionally, transcription factor required for normal development of thymus, parathyroid glands, ultimobranchial bodies, teeth, skeletal elements of skull and larynx as well as distal limbs. The chain is Paired box protein Pax-9 (Pax9) from Mus musculus (Mouse).